A 345-amino-acid chain; its full sequence is 1-aminocyclopropane-1-carboxylate oxidase homolog 7 (345 aa).

Lys16 is covalently cross-linked (Glycyl lysine isopeptide (Lys-Gly) (interchain with G-Cter in ubiquitin)). Residues 194–293 (KGLHMICHYY…RISIACFFSS (100 aa)) enclose the Fe2OG dioxygenase domain. Residues His218, Asp220, and His274 each contribute to the Fe cation site. Arg284 provides a ligand contact to 2-oxoglutarate.

This sequence belongs to the iron/ascorbate-dependent oxidoreductase family. It depends on Fe(2+) as a cofactor.

This Arabidopsis thaliana (Mouse-ear cress) protein is 1-aminocyclopropane-1-carboxylate oxidase homolog 7.